Here is a 92-residue protein sequence, read N- to C-terminus: Small ribosomal subunit protein uS19 (92 aa).

It belongs to the universal ribosomal protein uS19 family.

Functionally, protein S19 forms a complex with S13 that binds strongly to the 16S ribosomal RNA. The polypeptide is Small ribosomal subunit protein uS19 (Shigella boydii serotype 18 (strain CDC 3083-94 / BS512)).